The sequence spans 539 residues: MEGENDPLLGSYKPKRRRSSLVYGLSRPQFLDTAASEVSPIPQERPTTSLRKPTPRVQRPATDVSYGALEETEENESIASGLSVQEDFNSKAWWKELTLLIKFATPVVLTSLLQYGEVVTTVFSLGHLGKTELAAASLSNMTATITAFAIYQGIVSALDTVGTQSFGSGNYEMVGLHLQRILAILLLIQFPIFLIWWKIEGILLFLRQDPLTCMFAAKYMRVMMLASPAYALFEALKRFLQVQGIFHPVTYILAIVVPINIFLNYLFVWSPWVGFGFLGAPVAVALTLWSACAVLIIYIMKVNGRQAWGGFSREALKNWGPLCRLAVPGVIMICSEYWAFELVTFASGVLGTTELASMSVLSTTSTLSYNLAFGVAAAAATRVGNLIGAGNTKLAKLATHVSINLGAAIGVIIAVILFLTRNTWTYIFTSDKDVVALVATIIPLVALINIADNTQCVAGGLLRGQGRQRIGGVVNFIAYYLLGLPVAIILCFKLDWGLYGLWIGIGAAILIIAGVETWCSLHVNWDHLVELANRQFDEA.

Residues 34–63 are disordered; the sequence is AASEVSPIPQERPTTSLRKPTPRVQRPATD. The next 11 helical transmembrane spans lie at 103–123, 141–161, 184–204, 244–264, 277–299, 325–345, 360–380, 399–419, 434–454, 470–490, and 496–516; these read FATP…TTVF, MTAT…LDTV, ILLL…GILL, GIFH…IFLN, FLGA…IIYI, LAVP…LVTF, VLST…AAAA, THVS…ILFL, VVAL…ADNT, IGGV…AIIL, and WGLY…AGVE.

It belongs to the multi antimicrobial extrusion (MATE) (TC 2.A.66.1) family.

The protein resides in the vacuole membrane. This is an uncharacterized protein from Schizosaccharomyces pombe (strain 972 / ATCC 24843) (Fission yeast).